Consider the following 160-residue polypeptide: 2-C-methyl-D-erythritol 2,4-cyclodiphosphate synthase (160 aa).

The a divalent metal cation site is built by Asp-12 and His-14. 4-CDP-2-C-methyl-D-erythritol 2-phosphate contacts are provided by residues Asp-12–His-14 and His-38–Ser-39. A divalent metal cation is bound at residue His-46. 4-CDP-2-C-methyl-D-erythritol 2-phosphate is bound by residues Asp-60–Gly-62, Phe-65–Asp-69, Thr-136–Glu-139, Phe-143, and Arg-146.

This sequence belongs to the IspF family. Homotrimer. Requires a divalent metal cation as cofactor.

It catalyses the reaction 4-CDP-2-C-methyl-D-erythritol 2-phosphate = 2-C-methyl-D-erythritol 2,4-cyclic diphosphate + CMP. It functions in the pathway isoprenoid biosynthesis; isopentenyl diphosphate biosynthesis via DXP pathway; isopentenyl diphosphate from 1-deoxy-D-xylulose 5-phosphate: step 4/6. Involved in the biosynthesis of isopentenyl diphosphate (IPP) and dimethylallyl diphosphate (DMAPP), two major building blocks of isoprenoid compounds. Catalyzes the conversion of 4-diphosphocytidyl-2-C-methyl-D-erythritol 2-phosphate (CDP-ME2P) to 2-C-methyl-D-erythritol 2,4-cyclodiphosphate (ME-CPP) with a corresponding release of cytidine 5-monophosphate (CMP). The chain is 2-C-methyl-D-erythritol 2,4-cyclodiphosphate synthase from Acinetobacter baumannii (strain SDF).